The primary structure comprises 395 residues: MMILGNLRVATLSDGYGLIPDAAILIEGGRIQWVGPEAHLPPSAAPRHDMGGRLCTPALIDCHTHAVFAGTRAAEFEMRLKGASYAEVAAAGGGIVSTVMATRAAGADELLAASLPRIDAMLAGGVGTVEIKSGYGLDIETELRMLRVARRIGELRKVRVRTSFLGAHAVPPDHRGRPDAYLAEVVLPALKVAQDEGLVDAVDGFCEGIAFSPAQIAHLFAQAHKLRLPVKLHAEQLSNLGGAALAARHDALSADHLEYLDAEGVAALAAAGTVAVLLPGAFYALRETQAPPVAALRAAGVPMAVATDLNPGTSPLGALGLAMNMACTLFRLTPEEALAGTTIHAARALGLSDTGRIAPGFRADLAIWEAEHPAELSWRIGPAPLHARLHEGEFV.

Residues H63 and H65 each contribute to the Fe(3+) site. Residues H63 and H65 each contribute to the Zn(2+) site. Residues R72, Y135, and H168 each contribute to the 4-imidazolone-5-propanoate site. Y135 provides a ligand contact to N-formimidoyl-L-glutamate. H233 is a binding site for Fe(3+). H233 serves as a coordination point for Zn(2+). Q236 lines the 4-imidazolone-5-propanoate pocket. D308 contacts Fe(3+). D308 lines the Zn(2+) pocket. Residues N310 and G312 each coordinate N-formimidoyl-L-glutamate. T313 contacts 4-imidazolone-5-propanoate.

Belongs to the metallo-dependent hydrolases superfamily. HutI family. It depends on Zn(2+) as a cofactor. Requires Fe(3+) as cofactor.

The protein localises to the cytoplasm. It catalyses the reaction 4-imidazolone-5-propanoate + H2O = N-formimidoyl-L-glutamate. Its pathway is amino-acid degradation; L-histidine degradation into L-glutamate; N-formimidoyl-L-glutamate from L-histidine: step 3/3. In terms of biological role, catalyzes the hydrolytic cleavage of the carbon-nitrogen bond in imidazolone-5-propanoate to yield N-formimidoyl-L-glutamate. It is the third step in the universal histidine degradation pathway. In Cereibacter sphaeroides (strain ATCC 17023 / DSM 158 / JCM 6121 / CCUG 31486 / LMG 2827 / NBRC 12203 / NCIMB 8253 / ATH 2.4.1.) (Rhodobacter sphaeroides), this protein is Imidazolonepropionase.